The chain runs to 377 residues: S-adenosylmethionine decarboxylase proenzyme 2 (377 aa).

Active-site residues include Glu-24 and Glu-27. The active-site Schiff-base intermediate with substrate; via pyruvic acid is the Ser-84. The residue at position 84 (Ser-84) is a Pyruvic acid (Ser); by autocatalysis. Catalysis depends on Cys-98, which acts as the Proton donor; for catalytic activity. Catalysis depends on proton acceptor; for processing activity residues Ser-246 and His-259.

This sequence belongs to the eukaryotic AdoMetDC family. Pyruvate serves as cofactor. Is synthesized initially as an inactive proenzyme. Formation of the active enzyme involves a self-maturation process in which the active site pyruvoyl group is generated from an internal serine residue via an autocatalytic post-translational modification. Two non-identical subunits are generated from the proenzyme in this reaction, and the pyruvate is formed at the N-terminus of the alpha chain, which is derived from the carboxyl end of the proenzyme. The post-translation cleavage follows an unusual pathway, termed non-hydrolytic serinolysis, in which the side chain hydroxyl group of the serine supplies its oxygen atom to form the C-terminus of the beta chain, while the remainder of the serine residue undergoes an oxidative deamination to produce ammonia and the pyruvoyl group blocking the N-terminus of the alpha chain.

It carries out the reaction S-adenosyl-L-methionine + H(+) = S-adenosyl 3-(methylsulfanyl)propylamine + CO2. It participates in amine and polyamine biosynthesis; S-adenosylmethioninamine biosynthesis; S-adenosylmethioninamine from S-adenosyl-L-methionine: step 1/1. The protein is S-adenosylmethionine decarboxylase proenzyme 2 (SAMDC2) of Dianthus caryophyllus (Carnation).